A 96-amino-acid polypeptide reads, in one-letter code: DNA-binding protein Saci_1468 (96 aa).

Belongs to the PDCD5 family.

This is DNA-binding protein Saci_1468 from Sulfolobus acidocaldarius (strain ATCC 33909 / DSM 639 / JCM 8929 / NBRC 15157 / NCIMB 11770).